Here is a 314-residue protein sequence, read N- to C-terminus: DNA-directed RNA polymerase subunit alpha (314 aa).

An alpha N-terminal domain (alpha-NTD) region spans residues Met-1–Thr-228. An alpha C-terminal domain (alpha-CTD) region spans residues Lys-245–Asp-314.

This sequence belongs to the RNA polymerase alpha chain family. Homodimer. The RNAP catalytic core consists of 2 alpha, 1 beta, 1 beta' and 1 omega subunit. When a sigma factor is associated with the core the holoenzyme is formed, which can initiate transcription.

The enzyme catalyses RNA(n) + a ribonucleoside 5'-triphosphate = RNA(n+1) + diphosphate. Its function is as follows. DNA-dependent RNA polymerase catalyzes the transcription of DNA into RNA using the four ribonucleoside triphosphates as substrates. The protein is DNA-directed RNA polymerase subunit alpha of Staphylococcus aureus (strain bovine RF122 / ET3-1).